The following is a 640-amino-acid chain: Threonine--tRNA ligase (640 aa).

One can recognise a TGS domain in the interval 1–61 (MVKITYPDNS…MQDSTIKLIT (61 aa)). The segment at 242-533 (DHRKLGPKLN…LIENFAGEFP (292 aa)) is catalytic. Cys334, His385, and His510 together coordinate Zn(2+).

The protein belongs to the class-II aminoacyl-tRNA synthetase family. As to quaternary structure, homodimer. The cofactor is Zn(2+).

The protein resides in the cytoplasm. The enzyme catalyses tRNA(Thr) + L-threonine + ATP = L-threonyl-tRNA(Thr) + AMP + diphosphate + H(+). In terms of biological role, catalyzes the attachment of threonine to tRNA(Thr) in a two-step reaction: L-threonine is first activated by ATP to form Thr-AMP and then transferred to the acceptor end of tRNA(Thr). Also edits incorrectly charged L-seryl-tRNA(Thr). The chain is Threonine--tRNA ligase from Petrotoga mobilis (strain DSM 10674 / SJ95).